A 246-amino-acid polypeptide reads, in one-letter code: 3-deoxy-manno-octulosonate cytidylyltransferase (246 aa).

The protein belongs to the KdsB family.

The protein localises to the cytoplasm. It catalyses the reaction 3-deoxy-alpha-D-manno-oct-2-ulosonate + CTP = CMP-3-deoxy-beta-D-manno-octulosonate + diphosphate. Its pathway is nucleotide-sugar biosynthesis; CMP-3-deoxy-D-manno-octulosonate biosynthesis; CMP-3-deoxy-D-manno-octulosonate from 3-deoxy-D-manno-octulosonate and CTP: step 1/1. It functions in the pathway bacterial outer membrane biogenesis; lipopolysaccharide biosynthesis. Activates KDO (a required 8-carbon sugar) for incorporation into bacterial lipopolysaccharide in Gram-negative bacteria. The polypeptide is 3-deoxy-manno-octulosonate cytidylyltransferase (Leptospira biflexa serovar Patoc (strain Patoc 1 / Ames)).